Here is a 371-residue protein sequence, read N- to C-terminus: Leu/Ile/Val-binding protein homolog 1 (371 aa).

An N-terminal signal peptide occupies residues 1 to 23 (MRKTLFSGVALAAVIAFGGSAWA).

Belongs to the leucine-binding protein family.

Functionally, component of an amino-acid transport system. The protein is Leu/Ile/Val-binding protein homolog 1 of Brucella abortus (strain 2308).